A 560-amino-acid chain; its full sequence is NADH-quinone oxidoreductase subunit C/D (560 aa).

Residues 2-157 (NKLENLKQLL…NNQQACTNSL (156 aa)) form an NADH dehydrogenase I subunit C region. Residues 175–560 (KYLPLNIGPS…MNLIAGELDR (386 aa)) are NADH dehydrogenase I subunit D.

In the N-terminal section; belongs to the complex I 30 kDa subunit family. It in the C-terminal section; belongs to the complex I 49 kDa subunit family. As to quaternary structure, NDH-1 is composed of 13 different subunits. Subunits NuoB, CD, E, F, and G constitute the peripheral sector of the complex.

It is found in the cytoplasm. It localises to the cell inner membrane. It catalyses the reaction a quinone + NADH + 5 H(+)(in) = a quinol + NAD(+) + 4 H(+)(out). Its function is as follows. NDH-1 shuttles electrons from NADH, via FMN and iron-sulfur (Fe-S) centers, to quinones in the respiratory chain. The immediate electron acceptor for the enzyme in this species is believed to be ubiquinone. Couples the redox reaction to proton translocation (for every two electrons transferred, four hydrogen ions are translocated across the cytoplasmic membrane), and thus conserves the redox energy in a proton gradient. This chain is NADH-quinone oxidoreductase subunit C/D, found in Bdellovibrio bacteriovorus (strain ATCC 15356 / DSM 50701 / NCIMB 9529 / HD100).